The following is a 138-amino-acid chain: U1 small nuclear ribonucleoprotein C (138 aa).

The Matrin-type zinc finger occupies 4–36; it reads FYCDYCDTYLTHDSPSVRKTHCSGRKHKENVRD. The residue at position 8 (Y8) is a Phosphotyrosine. Position 17 is a phosphoserine (S17). K52 bears the N6-acetyllysine mark. Residues 62–99 form a disordered region; it reads IPPNLFSAPPLGGPMIPPPHPSMMGPPPPGMMPVGPPP. A compositionally biased stretch (pro residues) spans 72-99; sequence LGGPMIPPPHPSMMGPPPPGMMPVGPPP.

It belongs to the U1 small nuclear ribonucleoprotein C family. As to quaternary structure, component of the U1 snRNP. The U1 snRNP is composed of the U1 snRNA and the 7 core Sm proteins SNRPB, SNRPD1, SNRPD2, SNRPD3, SNRPE, SNRPF and SNRPG that assemble in a heptameric protein ring on the Sm site of the small nuclear RNA to form the core snRNP, and at least 3 U1 snRNP-specific proteins SNRNP70/U1-70K, SNRPA/U1-A and SNRPC/U1-C. SNRPC/U1-C interacts with U1 snRNA and the 5' splice-site region of the pre-mRNA. Interacts (via N-terminus) with TIA1 (via C-terminus); thereby promoting spliceosomal U1 snRNP recruitment to 5' splice sites.

The protein localises to the nucleus. Its function is as follows. Component of the spliceosomal U1 snRNP, which is essential for recognition of the pre-mRNA 5' splice-site and the subsequent assembly of the spliceosome. SNRPC/U1-C is directly involved in initial 5' splice-site recognition for both constitutive and regulated alternative splicing. The interaction with the 5' splice-site seems to precede base-pairing between the pre-mRNA and the U1 snRNA. Stimulates commitment or early (E) complex formation by stabilizing the base pairing of the 5' end of the U1 snRNA and the 5' splice-site region. This chain is U1 small nuclear ribonucleoprotein C, found in Monodelphis domestica (Gray short-tailed opossum).